Here is a 169-residue protein sequence, read N- to C-terminus: ATP synthase subunit b (169 aa).

The chain crosses the membrane as a helical span at residues 11–31 (KLPLGNMLFIIISFLVLMVIL).

The protein belongs to the ATPase B chain family. In terms of assembly, F-type ATPases have 2 components, F(1) - the catalytic core - and F(0) - the membrane proton channel. F(1) has five subunits: alpha(3), beta(3), gamma(1), delta(1), epsilon(1). F(0) has three main subunits: a(1), b(2) and c(10-14). The alpha and beta chains form an alternating ring which encloses part of the gamma chain. F(1) is attached to F(0) by a central stalk formed by the gamma and epsilon chains, while a peripheral stalk is formed by the delta and b chains.

It localises to the cell membrane. Its function is as follows. F(1)F(0) ATP synthase produces ATP from ADP in the presence of a proton or sodium gradient. F-type ATPases consist of two structural domains, F(1) containing the extramembraneous catalytic core and F(0) containing the membrane proton channel, linked together by a central stalk and a peripheral stalk. During catalysis, ATP synthesis in the catalytic domain of F(1) is coupled via a rotary mechanism of the central stalk subunits to proton translocation. Component of the F(0) channel, it forms part of the peripheral stalk, linking F(1) to F(0). The sequence is that of ATP synthase subunit b from Leuconostoc citreum (strain KM20).